Consider the following 325-residue polypeptide: Elongation factor Ts, mitochondrial (325 aa).

Residues Met1–Ser45 constitute a mitochondrion transit peptide. 3 positions are modified to N6-succinyllysine: Lys76, Lys133, and Lys192. Residue Ser270 is modified to Phosphoserine. Residue Thr324 is modified to Phosphothreonine.

This sequence belongs to the EF-Ts family. In terms of tissue distribution, expressed in all tissues, with the highest levels of expression in skeletal muscle, liver and kidney.

It is found in the mitochondrion. In terms of biological role, associates with the EF-Tu.GDP complex and induces the exchange of GDP to GTP. It remains bound to the aminoacyl-tRNA.EF-Tu.GTP complex up to the GTP hydrolysis stage on the ribosome. This Homo sapiens (Human) protein is Elongation factor Ts, mitochondrial.